We begin with the raw amino-acid sequence, 165 residues long: Transcription antitermination protein NusB (165 aa).

The segment at 1 to 27 (MISDDTDQFNPRDAKSPEIAKGKSAKR) is disordered. A compositionally biased stretch (basic and acidic residues) spans 10–21 (NPRDAKSPEIAK).

It belongs to the NusB family.

Functionally, involved in transcription antitermination. Required for transcription of ribosomal RNA (rRNA) genes. Binds specifically to the boxA antiterminator sequence of the ribosomal RNA (rrn) operons. This chain is Transcription antitermination protein NusB, found in Pseudomonas syringae pv. tomato (strain ATCC BAA-871 / DC3000).